The sequence spans 922 residues: MTGNSDKVRSLFLTALMVFSVFAGTIAFSGGAAAAANVSVQQAAEYDSGTVELALNGSTGSPVTTGDINIYIDGNENPSNYGVSSVDTTDDGTTGRLQFSLDQDVQPNRNLTVEVSGLTGGDNTVVAEDIDVTSQTIDADDDSGDTNAFRGEVLAIRADGGEGDADDATSSTQIVVEDSNGAVVTQDTYTANSKVYTYETENLDTGEEYEVTVGGTADENITISNLDLNVNIDDDVGDGANIDDTDTLAVNVSTTRGGEPANATLFNEDDDKVATQIKSLKGNENVVFDFGNQSADDSPYYVKVTDNQTGVSAESDQINVSESGEGDASFETSTVQDEVGDVTNITVQMGNTENAVINVGSQNDDNYVIQGQLEDDNGDGEVTVQFNSYTAGTDNNNTVLTVPGDDDLDEVEEKGSFTDSRNSLDEDVLEPQSYSINVTAGTSPDVTSPDTVGTLRLNENSVESMQTWVAPSDADIDDEDIDIYDRIGENLTQSDDVAVEDVVVHEIQASGIEGALEYEQEDNGSSDVTDAFIAAADTTPDRINDDTSASGLQLYVNRTDVGANADADPINFANSSSAVTVVDDPDNNTYFVALDTEDVEFESGNTITEEEDTEINATFSVQEGPLTDDSSSESELYTTSERNAELNLDDDGFVTVGAAAGQTVSGDTNVAPGSELEVEMESESEANPFVERPEATVGPNGTYVATEDFSDYSAGTNFTVQTLDVDGDSDFSDEEDGRIVEADTATVSISDQESDGSEVVVDSAQLSSGGFIAIHAGDASGDVVGNSEYLEAGTYNDLTITLDEPMDENFTAVAMPHQDTNGNEEYDFPGDDGPYTQNGSAVTDSANVTVSAEEPEDTPEDTPEDTPEDTPEDTPEDTPADTPEDTPDTGTETTEAEGPGFTAAIALIALVAAALLAVRRDN.

Residues 1–23 (MTGNSDKVRSLFLTALMVFSVFA) form the signal peptide. N-linked (GlcNAc...) asparagine glycosylation is found at Asn37, Asn56, Asn110, Asn220, Asn251, Asn262, and Asn292. An N-linked (GalNAc...) asparagine glycan is attached at Asn307. 15 N-linked (GlcNAc...) asparagine glycosylation sites follow: Asn319, Asn344, Asn396, Asn437, Asn490, Asn523, Asn557, Asn574, Asn587, Asn616, Asn700, Asn717, Asn809, Asn838, and Asn847. The tract at residues 816 to 899 (PHQDTNGNEE…GTETTEAEGP (84 aa)) is disordered. Polar residues predominate over residues 835–850 (YTQNGSAVTDSANVTV). Residues 853–887 (EEPEDTPEDTPEDTPEDTPEDTPEDTPADTPEDTP) show a composition bias toward acidic residues. Residues 888 to 899 (DTGTETTEAEGP) show a composition bias toward low complexity. Residues 898–918 (GPGFTAAIALIALVAAALLAV) traverse the membrane as a helical segment. The PGF sorting signal signature appears at 899 to 901 (PGF).

Belongs to the halobacterial S-layer protein family. In terms of processing, N-glycosylated on Asn-307; this N-linked glycan is a branched trisaccharide containing 2-amino-6-sulfo-2,6-dideoxy-glucose (sulfoquinovosamine). O-glycosylated on Thr residues within the DTPE repeats in the C-terminal region; glycans consist of Glc-Gal disaccharides. Post-translationally, cleaved by the archaeosortase ArtA at the C-terminus, with removal of a short hydrophobic segment. In terms of processing, lipidation.

It is found in the secreted. It localises to the cell wall. The protein resides in the S-layer. The protein localises to the cell membrane. S-layer protein. The S-layer is a paracrystalline mono-layered assembly of proteins which coat the surface of the cell. In H.hispanica, the S-layer contains two different glycoproteins, Slg1 and Slg2, which share highly similar amino acid sequences. This chain is Cell surface glycoprotein 2, found in Haloarcula hispanica (strain ATCC 33960 / DSM 4426 / JCM 8911 / NBRC 102182 / NCIMB 2187 / VKM B-1755).